Reading from the N-terminus, the 425-residue chain is Dihydroorotase (425 aa).

Positions 56 and 58 each coordinate Zn(2+). Substrate contacts are provided by residues 58–60 and Asn-90; that span reads HWR. Residues Asp-147, His-174, and His-227 each contribute to the Zn(2+) site. Asn-273 serves as a coordination point for substrate. Residue Asp-300 participates in Zn(2+) binding. Asp-300 is an active-site residue. Residues His-304 and 318-319 each bind substrate; that span reads FG.

It belongs to the metallo-dependent hydrolases superfamily. DHOase family. Class I DHOase subfamily. The cofactor is Zn(2+).

It catalyses the reaction (S)-dihydroorotate + H2O = N-carbamoyl-L-aspartate + H(+). It participates in pyrimidine metabolism; UMP biosynthesis via de novo pathway; (S)-dihydroorotate from bicarbonate: step 3/3. In terms of biological role, catalyzes the reversible cyclization of carbamoyl aspartate to dihydroorotate. The chain is Dihydroorotase from Fusobacterium nucleatum subsp. nucleatum (strain ATCC 25586 / DSM 15643 / BCRC 10681 / CIP 101130 / JCM 8532 / KCTC 2640 / LMG 13131 / VPI 4355).